The chain runs to 427 residues: Dihydroorotase (427 aa).

Zn(2+)-binding residues include H60 and H62. Residues 62-64 (HLR) and N94 contribute to the substrate site. Positions 152, 179, and 232 each coordinate Zn(2+). N278 serves as a coordination point for substrate. D305 is a binding site for Zn(2+). Residue D305 is part of the active site. Residues H309 and 323–324 (FG) contribute to the substrate site.

It belongs to the metallo-dependent hydrolases superfamily. DHOase family. Class I DHOase subfamily. It depends on Zn(2+) as a cofactor.

The catalysed reaction is (S)-dihydroorotate + H2O = N-carbamoyl-L-aspartate + H(+). It functions in the pathway pyrimidine metabolism; UMP biosynthesis via de novo pathway; (S)-dihydroorotate from bicarbonate: step 3/3. Its function is as follows. Catalyzes the reversible cyclization of carbamoyl aspartate to dihydroorotate. This Geobacillus sp. (strain WCH70) protein is Dihydroorotase.